The primary structure comprises 357 residues: Peptide chain release factor 1 (357 aa).

Gln236 carries the post-translational modification N5-methylglutamine.

Belongs to the prokaryotic/mitochondrial release factor family. Methylated by PrmC. Methylation increases the termination efficiency of RF1.

The protein resides in the cytoplasm. Functionally, peptide chain release factor 1 directs the termination of translation in response to the peptide chain termination codons UAG and UAA. This chain is Peptide chain release factor 1, found in Mycobacterium ulcerans (strain Agy99).